Consider the following 240-residue polypeptide: Phosphatidylserine decarboxylase proenzyme (240 aa).

The active-site Schiff-base intermediate with substrate; via pyruvic acid is the Ser-209. Ser-209 bears the Pyruvic acid (Ser); by autocatalysis mark.

This sequence belongs to the phosphatidylserine decarboxylase family. PSD-A subfamily. Heterodimer of a large membrane-associated beta subunit and a small pyruvoyl-containing alpha subunit. Pyruvate serves as cofactor. Is synthesized initially as an inactive proenzyme. Formation of the active enzyme involves a self-maturation process in which the active site pyruvoyl group is generated from an internal serine residue via an autocatalytic post-translational modification. Two non-identical subunits are generated from the proenzyme in this reaction, and the pyruvate is formed at the N-terminus of the alpha chain, which is derived from the carboxyl end of the proenzyme. The post-translation cleavage follows an unusual pathway, termed non-hydrolytic serinolysis, in which the side chain hydroxyl group of the serine supplies its oxygen atom to form the C-terminus of the beta chain, while the remainder of the serine residue undergoes an oxidative deamination to produce ammonia and the pyruvoyl prosthetic group on the alpha chain.

It is found in the cell membrane. The catalysed reaction is a 1,2-diacyl-sn-glycero-3-phospho-L-serine + H(+) = a 1,2-diacyl-sn-glycero-3-phosphoethanolamine + CO2. Its pathway is phospholipid metabolism; phosphatidylethanolamine biosynthesis; phosphatidylethanolamine from CDP-diacylglycerol: step 2/2. Functionally, catalyzes the formation of phosphatidylethanolamine (PtdEtn) from phosphatidylserine (PtdSer). This chain is Phosphatidylserine decarboxylase proenzyme, found in Mycobacterium ulcerans (strain Agy99).